The chain runs to 231 residues: Octanoyltransferase (231 aa).

The BPL/LPL catalytic domain maps to 49-231 (SEAAEQVWLL…KRTFSEVFGS (183 aa)). Substrate is bound by residues 87–94 (RGGQITYH), 162–164 (AIG), and 175–177 (GVS). Residue Cys193 is the Acyl-thioester intermediate of the active site.

The protein belongs to the LipB family.

The protein localises to the cytoplasm. The enzyme catalyses octanoyl-[ACP] + L-lysyl-[protein] = N(6)-octanoyl-L-lysyl-[protein] + holo-[ACP] + H(+). It functions in the pathway protein modification; protein lipoylation via endogenous pathway; protein N(6)-(lipoyl)lysine from octanoyl-[acyl-carrier-protein]: step 1/2. Its function is as follows. Catalyzes the transfer of endogenously produced octanoic acid from octanoyl-acyl-carrier-protein onto the lipoyl domains of lipoate-dependent enzymes. Lipoyl-ACP can also act as a substrate although octanoyl-ACP is likely to be the physiological substrate. The sequence is that of Octanoyltransferase from Nitrobacter winogradskyi (strain ATCC 25391 / DSM 10237 / CIP 104748 / NCIMB 11846 / Nb-255).